We begin with the raw amino-acid sequence, 325 residues long: Outer spore wall protein LDS1 (325 aa).

The Cytoplasmic segment spans residues 1–91 (MSFTGSLALA…NTNKSSYSTT (91 aa)). The helical transmembrane segment at 92 to 112 (MLGILSSYLIMFALVSFVYWA) threads the bilayer. The Extracellular segment spans residues 113-118 (TITPMY). Residues 119 to 139 (TAFLIVLGPIGLFIAIFHSFL) form a helical membrane-spanning segment. The Cytoplasmic portion of the chain corresponds to 140-208 (QANVFTLLFM…VKYMLGLSVL (69 aa)). A helical membrane pass occupies residues 209–229 (FVLLVISFFPLIGPILFHILI). The Extracellular portion of the chain corresponds to 230 to 263 (SPFITQIYFTKVLRLQNFDNIQRRENIYLHAGQY). Residues 264-284 (ASFGFLAGLIESVPILAGFAI) traverse the membrane as a helical segment. Residues 285-325 (STNTIGSVLFNLDHPMVPENLVETQAEIEAAPQDINQQPNQ) lie on the Cytoplasmic side of the membrane.

It belongs to the LDS family.

The protein resides in the prospore membrane. Its subcellular location is the lipid droplet. It localises to the spore wall. Involved in spore wall assembly. The chain is Outer spore wall protein LDS1 from Saccharomyces cerevisiae (strain ATCC 204508 / S288c) (Baker's yeast).